The chain runs to 316 residues: GTP cyclohydrolase FolE2 1 (316 aa).

Belongs to the GTP cyclohydrolase IV family.

The enzyme catalyses GTP + H2O = 7,8-dihydroneopterin 3'-triphosphate + formate + H(+). It participates in cofactor biosynthesis; 7,8-dihydroneopterin triphosphate biosynthesis; 7,8-dihydroneopterin triphosphate from GTP: step 1/1. Its function is as follows. Converts GTP to 7,8-dihydroneopterin triphosphate. This chain is GTP cyclohydrolase FolE2 1, found in Burkholderia lata (strain ATCC 17760 / DSM 23089 / LMG 22485 / NCIMB 9086 / R18194 / 383).